The chain runs to 132 residues: Hemoglobin heart muscle subunit alpha-type (132 aa).

Residues 1–132 (GLSDSEKSAV…GEVGAILTSS (132 aa)) enclose the Globin domain. Residues His58 and His83 each coordinate heme b.

Belongs to the globin family. Monomer.

In terms of biological role, this hemoglobin may replace myocardial myoglobin in this amphibian species. This chain is Hemoglobin heart muscle subunit alpha-type, found in Aquarana catesbeiana (American bullfrog).